We begin with the raw amino-acid sequence, 625 residues long: MNIQKKEVYSFQSEVKQLLHLMIHSLYSNKEIFLRELISNASDAIDKLRFQSISNPELYENDSDFKIQISINKSQGTLIISDNGIGMTRQDVVENLGTIAKSGTKSFIKSLEKKEKNVKNELIGEFGVGFYSSFIVSKKVSVRTRFAGSKSNLGVLWESSGEGEYNITDIKKKTRGTEITLFLKKEEEEFLELWRIEGIVSKYSDHITVPVKIQKYDEKNKIYFWEKINKAKALWTQNKATISEKEYQEFYKHLTNDQNNPLFWSHNHVEGINEYISLLFIPEKAAWDIWNRDNKSGLKLYVKRVYIMDNSQAFLPNYLRFIRGLIDSNNLPLNVSREILQDNSITQNLKKALIKRSLKMLQTLSKKDNEKYQIFWNQFGSVLKEGPAEDSNNLNLIASLLRFTSIQNNSSEQNISLEKYISNMHEKQEKIYYITADSYTSAKNSPHLELFNKKNIDVLLLSDRIDEWMMNYLTEFEGKKFQSISKEDLSLNKLTKENENKKETSTEMIEFLKKVKKTLGDKVKSVRLTYRLTETPCIVLSDSNEMSTQMAKLFSAAGQSVPELKYIFEINPEHKLIQKICKIKENEKFDEWIKLLLDQALFAEKGNLENPHEFIARTNKLILEQ.

Residues 1–337 (MNIQKKEVYS…SNNLPLNVSR (337 aa)) are a; substrate-binding. Residues 338–552 (EILQDNSITQ…SNEMSTQMAK (215 aa)) are b. The segment at 553-625 (LFSAAGQSVP…ARTNKLILEQ (73 aa)) is c.

Belongs to the heat shock protein 90 family. In terms of assembly, homodimer.

It localises to the cytoplasm. Its function is as follows. Molecular chaperone. Has ATPase activity. This is Chaperone protein HtpG from Buchnera aphidicola subsp. Schizaphis graminum (strain Sg).